The sequence spans 346 residues: (R,R)-butanediol dehydrogenase (346 aa).

Zn(2+) contacts are provided by Cys-37, His-70, and Glu-152.

It belongs to the zinc-containing alcohol dehydrogenase family. Homotetramer. Interacts with BrxC. Zn(2+) is required as a cofactor.

Its subcellular location is the cytoplasm. It localises to the secreted. The catalysed reaction is (R,R)-butane-2,3-diol + NAD(+) = (R)-acetoin + NADH + H(+). The sequence is that of (R,R)-butanediol dehydrogenase from Bacillus subtilis (strain 168).